The primary structure comprises 598 residues: Probable translation initiation factor IF-2 (598 aa).

Residues 3 to 225 (LRCPIVSVLG…GLAQKFLEQK (223 aa)) form the tr-type G domain. Residues 12 to 19 (GHVDHGKT) are G1. Position 12 to 19 (12 to 19 (GHVDHGKT)) interacts with GTP. The segment at 37–41 (GITQH) is G2. The interval 76–79 (DTPG) is G3. GTP is bound by residues 76–80 (DTPGH) and 130–133 (NKLD). The interval 130–133 (NKLD) is G4. Residues 200-202 (SAI) form a G5 region.

It belongs to the TRAFAC class translation factor GTPase superfamily. Classic translation factor GTPase family. IF-2 subfamily.

Functionally, function in general translation initiation by promoting the binding of the formylmethionine-tRNA to ribosomes. Seems to function along with eIF-2. The polypeptide is Probable translation initiation factor IF-2 (Methanococcus vannielii (strain ATCC 35089 / DSM 1224 / JCM 13029 / OCM 148 / SB)).